A 540-amino-acid polypeptide reads, in one-letter code: NADH-quinone oxidoreductase subunit N 1 (540 aa).

Helical transmembrane passes span 11–31 (ILPELMLLLLGLLVLGSDVLT), 52–72 (AVGLGLVFIVGLVQSRFLFTV), 109–129 (FTMIARLTFIGAAFLTTLLAM), 142–162 (ALLIFSTLGMSIMAAATEFIL), 195–215 (FLFGSLSSAIFLYGISLTYGF), 250–270 (LILGMLFIIAGLGYKISVVPF), 284–306 (PVTAFLSTASKAAGFLLLYRLLT), 324–344 (WTSILAILALVTVIVGNLAAL), 352–372 (LLAYSSIGHAGFLLLAVLLWA), 386–406 (LIYYLIVYSLTNLGSFGVLAV), 431–451 (LMMTILILSLAGIPPLAGFWA), 464–486 (AVPLVTIAVIMTVVSLYYYLRFL), and 508–528 (AAIILSTVLVVLLGLLPNLIW).

It belongs to the complex I subunit 2 family. As to quaternary structure, NDH-1 is composed of 14 different subunits. Subunits NuoA, H, J, K, L, M, N constitute the membrane sector of the complex.

The protein resides in the cell membrane. It catalyses the reaction a quinone + NADH + 5 H(+)(in) = a quinol + NAD(+) + 4 H(+)(out). Its function is as follows. NDH-1 shuttles electrons from NADH, via FMN and iron-sulfur (Fe-S) centers, to quinones in the respiratory chain. The immediate electron acceptor for the enzyme in this species is believed to be ubiquinone. Couples the redox reaction to proton translocation (for every two electrons transferred, four hydrogen ions are translocated across the cytoplasmic membrane), and thus conserves the redox energy in a proton gradient. The protein is NADH-quinone oxidoreductase subunit N 1 of Roseiflexus castenholzii (strain DSM 13941 / HLO8).